A 305-amino-acid chain; its full sequence is Heme A synthase (305 aa).

At 1–6 the chain is on the cytoplasmic side; sequence MKKFLK. The chain crosses the membrane as a helical span at residues 7-27; the sequence is VWSVLTIICMTVVVFGGALVT. Residues 28–63 lie on the Extracellular side of the membrane; the sequence is KTGSADGCGNSWPLCNGQLVRLTDVTPEKLIEFMHR. A disulfide bond links cysteine 35 and cysteine 42. Glutamate 59 is an active-site residue. Histidine 62 contributes to the heme o binding site. A helical membrane pass occupies residues 64–84; that stretch reads MTTGISSIFVIVLAICAWIYM. Residues 85–92 lie on the Cytoplasmic side of the membrane; that stretch reads KNRRETKP. Residues 93 to 113 form a helical membrane-spanning segment; that stretch reads LAIIAVLFLIIQALMGMAAVV. The Extracellular portion of the chain corresponds to 114–122; the sequence is WGQNPYIMA. A helical membrane pass occupies residues 123-143; that stretch reads LHFGISIICYASIVLLALMIF. Residue histidine 124 coordinates heme o. Topologically, residues 144-160 are cytoplasmic; that stretch reads EVDRKFDARNLVMGTKL. Residues 161 to 181 traverse the membrane as a helical segment; it reads RVNIYALTIYTYLAVYTGALV. Residues 182–212 lie on the Extracellular side of the membrane; the sequence is RHEKASMAVPVWPFENGHFIMPTSVQDYVQY. A helical transmembrane segment spans residues 213-233; that stretch reads FHRLAAFILIVWLLYVTWLVF. Histidine 214 contributes to the heme b binding site. The Cytoplasmic portion of the chain corresponds to 234 to 240; sequence RDYRRYR. The helical transmembrane segment at 241–261 threads the bilayer; it reads VLTFSMVLSLVFIALQAVTGA. Over 262 to 271 the chain is Extracellular; it reads LSVYTGVNLY. A helical transmembrane segment spans residues 272-292; the sequence is IALAHSLIITMLFALLCYLCL. Position 276 (histidine 276) interacts with heme b. Residues 293 to 305 lie on the Cytoplasmic side of the membrane; the sequence is LASRSKSNRLRIK.

Belongs to the COX15/CtaA family. Type 1 subfamily. In terms of assembly, interacts with CtaB. Heme b is required as a cofactor.

It localises to the cell membrane. It catalyses the reaction Fe(II)-heme o + 2 A + H2O = Fe(II)-heme a + 2 AH2. It functions in the pathway porphyrin-containing compound metabolism; heme A biosynthesis; heme A from heme O: step 1/1. Catalyzes the conversion of heme O to heme A by two successive hydroxylations of the methyl group at C8. The first hydroxylation forms heme I, the second hydroxylation results in an unstable dihydroxymethyl group, which spontaneously dehydrates, resulting in the formyl group of heme A. The chain is Heme A synthase from Listeria monocytogenes serovar 1/2a (strain ATCC BAA-679 / EGD-e).